The chain runs to 83 residues: Exodeoxyribonuclease 7 small subunit (83 aa).

The protein belongs to the XseB family. Heterooligomer composed of large and small subunits.

The protein resides in the cytoplasm. The catalysed reaction is Exonucleolytic cleavage in either 5'- to 3'- or 3'- to 5'-direction to yield nucleoside 5'-phosphates.. Functionally, bidirectionally degrades single-stranded DNA into large acid-insoluble oligonucleotides, which are then degraded further into small acid-soluble oligonucleotides. This chain is Exodeoxyribonuclease 7 small subunit, found in Nitrobacter winogradskyi (strain ATCC 25391 / DSM 10237 / CIP 104748 / NCIMB 11846 / Nb-255).